Consider the following 721-residue polypeptide: Pentatricopeptide repeat-containing protein At3g49710 (721 aa).

PPR repeat units lie at residues S42 to P72, N73 to P103, D104 to V138, D139 to F169, Y172 to L202, D204 to I238, D239 to Q273, N274 to P307, D308 to P343, D344 to S378, R380 to L410, N411 to P445, N446 to T476, and E482 to K512. The tract at residues A517–K592 is type E motif. A type E(+) motif region spans residues K593–K623. The tract at residues K624–W721 is type DYW motif.

The protein belongs to the PPR family. PCMP-H subfamily.

The protein is Pentatricopeptide repeat-containing protein At3g49710 (PCMP-H79) of Arabidopsis thaliana (Mouse-ear cress).